Here is a 394-residue protein sequence, read N- to C-terminus: N-acetylgalactosamine-6-phosphate deacetylase (394 aa).

E137 serves as a coordination point for Zn(2+). 148-149 (CH) provides a ligand contact to substrate. Residues H201 and H222 each coordinate Zn(2+). Substrate-binding positions include 225-226 (NG), R233, and 254-257 (DGQH). D280 acts as the Proton donor/acceptor in catalysis. 313 to 315 (LAG) is a binding site for substrate.

It belongs to the metallo-dependent hydrolases superfamily. NagA family.

Its subcellular location is the cytoplasm. The catalysed reaction is N-acetyl-D-galactosamine 6-phosphate + H2O = D-galactosamine 6-phosphate + acetate. It carries out the reaction N-acetyl-D-glucosamine 6-phosphate + H2O = D-glucosamine 6-phosphate + acetate. Its function is as follows. Involved in the pathway of N-acetyl-D-galactosamine degradation. Catalyzes the conversion of N-acetyl-D-galactosamine 6-phosphate to D-galactosamine 6-phosphate and acetate. It can also catalyze the conversion of N-acetyl-D-glucosamine 6-phosphate. The protein is N-acetylgalactosamine-6-phosphate deacetylase of Shewanella sp. (strain ANA-3).